Consider the following 20-residue polypeptide: Cytochrome P450 2A7 (20 aa).

The protein belongs to the cytochrome P450 family. The cofactor is heme.

Its subcellular location is the endoplasmic reticulum membrane. The protein localises to the microsome membrane. It carries out the reaction an organic molecule + reduced [NADPH--hemoprotein reductase] + O2 = an alcohol + oxidized [NADPH--hemoprotein reductase] + H2O + H(+). Functionally, exhibits a high coumarin 7-hydroxylase activity. The sequence is that of Cytochrome P450 2A7 (CYP2A7) from Papio sp. (Baboon).